A 235-amino-acid chain; its full sequence is Large ribosomal subunit protein uL1 (235 aa).

Belongs to the universal ribosomal protein uL1 family. Part of the 50S ribosomal subunit.

Its function is as follows. Binds directly to 23S rRNA. The L1 stalk is quite mobile in the ribosome, and is involved in E site tRNA release. In terms of biological role, protein L1 is also a translational repressor protein, it controls the translation of the L11 operon by binding to its mRNA. The sequence is that of Large ribosomal subunit protein uL1 from Prochlorococcus marinus subsp. pastoris (strain CCMP1986 / NIES-2087 / MED4).